Consider the following 132-residue polypeptide: Fluoride-specific ion channel FluC 3 (132 aa).

4 helical membrane passes run 4–24, 32–52, 66–86, and 95–115; these read ILLV…FGGW, FPVG…LIMY, IFLT…GYES, and LMLM…AVYL. Residues Gly74 and Thr77 each contribute to the Na(+) site.

Belongs to the fluoride channel Fluc/FEX (TC 1.A.43) family.

The protein localises to the cell membrane. The catalysed reaction is fluoride(in) = fluoride(out). With respect to regulation, na(+) is not transported, but it plays an essential structural role and its presence is essential for fluoride channel function. In terms of biological role, fluoride-specific ion channel. Important for reducing fluoride concentration in the cell, thus reducing its toxicity. The sequence is that of Fluoride-specific ion channel FluC 3 from Methanosarcina barkeri (strain Fusaro / DSM 804).